The following is a 1503-amino-acid chain: Lysophospholipase NTE1 (1503 aa).

Residues 1-25 (MDSSTAALATASAKLDAVAQQGSSS) lie on the Cytoplasmic side of the membrane. A helical membrane pass occupies residues 26 to 46 (WIGFFANIILGIISLVYSILY). At 47-71 (SVLKLTTFSIPSLLYTLFSTSLTVT) the chain is on the lumenal side. Residues 72–92 (MNATTLMLIIVLVFSLVSWFV) traverse the membrane as a helical segment. Residues 93 to 1503 (RYRYLNMYSR…RTMAPRRASI (1411 aa)) lie on the Cytoplasmic side of the membrane. Disordered stretches follow at residues 252–348 (RHGG…TTSV), 454–561 (TKGI…SNPF), and 722–745 (KNES…RFMD). Polar residues-rich tracts occupy residues 262-272 (TSATETYTSSR), 285-302 (STVS…SSHG), 487-496 (QRPSSVTASP), 506-542 (KHTS…STLL), 552-561 (PLSQRTSNPF), and 723-737 (NESS…QQGS). Residues 658–777 (GLPV…GYVG) and 821–941 (RLTN…IASR) each bind a nucleoside 3',5'-cyclic phosphate. In terms of domain architecture, PNPLA spans 1200-1364 (LVLGGGGARG…IDNLTVSHMK (165 aa)). The GXGXXG signature appears at 1204-1209 (GGGARG). The GXSXG motif lies at 1231 to 1235 (GTSIG). The active-site Nucleophile is Ser1233. The Proton acceptor role is filled by Asp1351. The DGA/G motif lies at 1351–1353 (DGG).

The protein belongs to the NTE family.

It is found in the endoplasmic reticulum membrane. The catalysed reaction is a 1-acyl-sn-glycero-3-phosphocholine + H2O = sn-glycerol 3-phosphocholine + a fatty acid + H(+). Its activity is regulated as follows. Inhibited by organophosphorus esters. Functionally, intracellular phospholipase B that catalyzes the double deacylation of phosphatidylcholine (PC) to glycerophosphocholine (GroPCho). Plays an important role in membrane lipid homeostasis. Responsible for the rapid PC turnover in response to inositol, elevated temperatures, or when choline is present in the growth medium. The sequence is that of Lysophospholipase NTE1 (NTE1) from Pyricularia oryzae (strain 70-15 / ATCC MYA-4617 / FGSC 8958) (Rice blast fungus).